The sequence spans 739 residues: Exocyst complex component 3-like protein (739 aa).

The interval 1-370 (MDSAARDKTQ…DVSDLEPLLT (370 aa)) is mediates interaction with EXOC2, EXOC4 and EXOC5.

This sequence belongs to the SEC6 family. As to quaternary structure, interacts with EXOC2, EXOC4 and EXOC5; may be part of the exocyst.

The protein localises to the cytoplasmic vesicle. Its subcellular location is the secretory vesicle. In terms of biological role, as part of the exocyst, may play a role in regulated exocytosis of insulin granules. This chain is Exocyst complex component 3-like protein (EXOC3L1), found in Bos taurus (Bovine).